We begin with the raw amino-acid sequence, 162 residues long: uncharacterized protein (162 aa).

This is an uncharacterized protein from Homo sapiens (Human).